The chain runs to 382 residues: MTMQAQLGDKTFTLERFPLDQKNRSLQAWDSADEYLIDYVSEHHPDCRSLLILNDSFGALSCYFSHKQLTVCSVNDSYISHQAAAYNLAENKIPAITFSQLDSLSALPEQVDLVLIKVPRTLGFLQYQLSELSEVLAPGTPVIAAAKTKDVHNSTIKAFEQFIGETKTSLAVKKSRLIISHAQGGYKAADFPVNWPLEGTDFTISNHANVFSRDSLDIGARFFFNYLPETNKAKSIIDLGCGNGVVGLMALSRCPNANITFVDESYMAVESARLNVELNMEAKYEQCSFVENDCLSGFERDSVDMVLCNPPFHQAQAVTDHIAWQMFKEAKDTLKEGGELRIIGNRHLDYHDKLNRMFGNCKLLGSNKKFVVLSATKNTGML.

This sequence belongs to the methyltransferase superfamily. RlmG family.

It is found in the cytoplasm. It catalyses the reaction guanosine(1835) in 23S rRNA + S-adenosyl-L-methionine = N(2)-methylguanosine(1835) in 23S rRNA + S-adenosyl-L-homocysteine + H(+). In terms of biological role, specifically methylates the guanine in position 1835 (m2G1835) of 23S rRNA. The protein is Ribosomal RNA large subunit methyltransferase G of Pseudoalteromonas translucida (strain TAC 125).